The following is a 331-amino-acid chain: Tryptophan--tRNA ligase (331 aa).

Residues 10–12 and 18–19 each bind ATP; these read QPS and GN. Positions 11-19 match the 'HIGH' region motif; that stretch reads PSGQLTLGN. Aspartate 133 serves as a coordination point for L-tryptophan. ATP contacts are provided by residues 145-147, valine 184, and 193-197; these read GED and KMSKS. The short motif at 193–197 is the 'KMSKS' region element; it reads KMSKS.

The protein belongs to the class-I aminoacyl-tRNA synthetase family. Homodimer.

The protein localises to the cytoplasm. It carries out the reaction tRNA(Trp) + L-tryptophan + ATP = L-tryptophyl-tRNA(Trp) + AMP + diphosphate + H(+). In terms of biological role, catalyzes the attachment of tryptophan to tRNA(Trp). In Listeria innocua serovar 6a (strain ATCC BAA-680 / CLIP 11262), this protein is Tryptophan--tRNA ligase.